We begin with the raw amino-acid sequence, 300 residues long: uncharacterized protein (300 aa).

The interval 230–251 (LRQSTSRQSISRQSISRQSTSR) is disordered. Positions 231–251 (RQSTSRQSISRQSISRQSTSR) are enriched in low complexity.

This is an uncharacterized protein from Acanthamoeba polyphaga (Amoeba).